Consider the following 317-residue polypeptide: Protein KlaC (317 aa).

In terms of biological role, belongs to the kla operon, which is associated with cryptic tellurite resistance, and IncW plasmid fertility inhibition. This is Protein KlaC (klaC) from Escherichia coli.